The sequence spans 331 residues: MKQTVYIASPESQQIHVWNLNHEGALTLTQVVDVPGQVQPMVVSPDKRYLYVGVRPEFRVLAYRIAPDDGALTFAAESALPGSPTHISTDHQGQFVFVGSYNAGNVSVTRLEDGLPVGVVDVVEGLDGCHSANISPDNRTLWVPALKQDRICLFTVSDDGHLVAQDPAEVTTVEGAGPRHMVFHPNEQYAYCVNELNSSVDVWELKDPHGNIECVQTLDMMPENFSDTRWAADIHITPDGRHLYACDRTASLITVFSVSEDGSVLSKEGFQPTETQPRGFNIDHRGKYLIAAGQKSHHISVYEIVGEQGLLHEKGRYAVGQGPMWVVVNAH.

Residue K287 is modified to N6-acetyllysine.

Belongs to the cycloisomerase 2 family.

The catalysed reaction is 6-phospho-D-glucono-1,5-lactone + H2O = 6-phospho-D-gluconate + H(+). It participates in carbohydrate degradation; pentose phosphate pathway; D-ribulose 5-phosphate from D-glucose 6-phosphate (oxidative stage): step 2/3. Catalyzes the hydrolysis of 6-phosphogluconolactone to 6-phosphogluconate. The sequence is that of 6-phosphogluconolactonase from Escherichia coli O157:H7.